A 264-amino-acid chain; its full sequence is tRNA (guanine-N(1)-)-methyltransferase (264 aa).

S-adenosyl-L-methionine contacts are provided by residues Gly-125 and 145–150 (LGDFVL).

Belongs to the RNA methyltransferase TrmD family. In terms of assembly, homodimer.

The protein resides in the cytoplasm. It carries out the reaction guanosine(37) in tRNA + S-adenosyl-L-methionine = N(1)-methylguanosine(37) in tRNA + S-adenosyl-L-homocysteine + H(+). In terms of biological role, specifically methylates guanosine-37 in various tRNAs. This Burkholderia lata (strain ATCC 17760 / DSM 23089 / LMG 22485 / NCIMB 9086 / R18194 / 383) protein is tRNA (guanine-N(1)-)-methyltransferase.